Consider the following 128-residue polypeptide: Z-ring associated protein G (128 aa).

The chain crosses the membrane as a helical span at residues 7–27 (EIWFSISIAFLIGTLCGVLVM). Residues 37–75 (QIQLKSELASAEAKIEEQKQQLERHFEQSANLLENLAED) are a coiled coil. The segment at 105-128 (NHANGDEDNQPRDYSDGSSGLLKS) is disordered. The span at 107 to 119 (ANGDEDNQPRDYS) shows a compositional bias: basic and acidic residues.

The protein belongs to the ZapG family. Homotetramer. In solution, is primarily monomeric but forms small amounts of stable tetramer and hexadecamer. The crystal structure of the cytosolic region shows a coiled-coil tetramer in the asymmetric unit that is very likely to be a physiologically relevant assembly of the protein.

The protein resides in the cell inner membrane. In terms of biological role, involved in cell division, cell envelope biogenesis and cell shape maintenance. This is Z-ring associated protein G from Haemophilus ducreyi (strain 35000HP / ATCC 700724).